A 4486-amino-acid chain; its full sequence is Dynein axonemal heavy chain 9 (4486 aa).

Positions 1-1831 (MRLAEERAAL…FANICDAQFL (1831 aa)) are stem. 5 coiled-coil regions span residues 381-410 (DLLR…EFQD), 504-529 (QSTD…LGTI), 639-662 (AEGK…ETRL), 752-823 (TLLE…TWVT), and 1326-1355 (NINV…AWDA). AAA regions lie at residues 1832–2053 (YSYE…VLVV), 2113–2334 (ALVR…TRFK), 2440–2688 (EFDP…IFQG), and 2787–3036 (NHNE…EQRY). Residues 1870 to 1877 (GPAGTGKT), 2151 to 2158 (GGAGTGKS), 2478 to 2485 (GTAGTGKS), and 2825 to 2832 (GVGGSGKQ) contribute to the ATP site. Coiled coils occupy residues 3051–3154 (YQSL…AKAE), 3285–3341 (KRQA…AEVT), and 3640–3675 (LVEN…REHY). Residues 3051-3341 (YQSLLHRHRK…LKCQQEAEVT (291 aa)) form a stalk region. AAA stretches follow at residues 3429–3656 (LMDD…EVEK) and 3866–4092 (LRDF…VLYN).

The protein belongs to the dynein heavy chain family. In terms of assembly, consists of at least two heavy chains and a number of intermediate and light chains. Interacts with ODAD1. Expressed in upper and lower respiratory airway epithelia (at protein level). Not detected in spermatozoa (at protein level).

It localises to the cytoplasm. The protein localises to the cytoskeleton. It is found in the cilium axoneme. Force generating protein required for cilia beating in respiratory epithelia. Produces force towards the minus ends of microtubules. Dynein has ATPase activity; the force-producing power stroke is thought to occur on release of ADP. In Homo sapiens (Human), this protein is Dynein axonemal heavy chain 9.